The sequence spans 240 residues: UDP-2,3-diacylglucosamine hydrolase (240 aa).

The Mn(2+) site is built by Asp-8, His-10, Asp-41, Asn-79, and His-114. 79 to 80 (NR) contacts substrate. Substrate contacts are provided by Asp-122, Ser-160, Asn-164, Lys-167, and His-195. Positions 195 and 197 each coordinate Mn(2+).

The protein belongs to the LpxH family. The cofactor is Mn(2+).

It is found in the cell inner membrane. The enzyme catalyses UDP-2-N,3-O-bis[(3R)-3-hydroxytetradecanoyl]-alpha-D-glucosamine + H2O = 2-N,3-O-bis[(3R)-3-hydroxytetradecanoyl]-alpha-D-glucosaminyl 1-phosphate + UMP + 2 H(+). Its pathway is glycolipid biosynthesis; lipid IV(A) biosynthesis; lipid IV(A) from (3R)-3-hydroxytetradecanoyl-[acyl-carrier-protein] and UDP-N-acetyl-alpha-D-glucosamine: step 4/6. Hydrolyzes the pyrophosphate bond of UDP-2,3-diacylglucosamine to yield 2,3-diacylglucosamine 1-phosphate (lipid X) and UMP by catalyzing the attack of water at the alpha-P atom. Involved in the biosynthesis of lipid A, a phosphorylated glycolipid that anchors the lipopolysaccharide to the outer membrane of the cell. In Salmonella paratyphi C (strain RKS4594), this protein is UDP-2,3-diacylglucosamine hydrolase.